Here is a 305-residue protein sequence, read N- to C-terminus: Sulfate adenylyltransferase subunit 2 (305 aa).

This sequence belongs to the PAPS reductase family. CysD subfamily. As to quaternary structure, heterodimer composed of CysD, the smaller subunit, and CysN.

It carries out the reaction sulfate + ATP + H(+) = adenosine 5'-phosphosulfate + diphosphate. The protein operates within sulfur metabolism; hydrogen sulfide biosynthesis; sulfite from sulfate: step 1/3. Functionally, with CysN forms the ATP sulfurylase (ATPS) that catalyzes the adenylation of sulfate producing adenosine 5'-phosphosulfate (APS) and diphosphate, the first enzymatic step in sulfur assimilation pathway. APS synthesis involves the formation of a high-energy phosphoric-sulfuric acid anhydride bond driven by GTP hydrolysis by CysN coupled to ATP hydrolysis by CysD. This is Sulfate adenylyltransferase subunit 2 from Pseudomonas fluorescens (strain ATCC BAA-477 / NRRL B-23932 / Pf-5).